The chain runs to 145 residues: 3-dehydroquinate dehydratase (145 aa).

Tyr22 acts as the Proton acceptor in catalysis. Asn71, His77, and Asp84 together coordinate substrate. His97 serves as the catalytic Proton donor. Substrate contacts are provided by residues 98–99 (LS) and Arg108.

This sequence belongs to the type-II 3-dehydroquinase family. In terms of assembly, homododecamer.

The catalysed reaction is 3-dehydroquinate = 3-dehydroshikimate + H2O. The protein operates within metabolic intermediate biosynthesis; chorismate biosynthesis; chorismate from D-erythrose 4-phosphate and phosphoenolpyruvate: step 3/7. In terms of biological role, catalyzes a trans-dehydration via an enolate intermediate. The sequence is that of 3-dehydroquinate dehydratase from Francisella tularensis subsp. mediasiatica (strain FSC147).